Here is a 150-residue protein sequence, read N- to C-terminus: Transcription antitermination protein NusB (150 aa).

This sequence belongs to the NusB family.

Functionally, involved in transcription antitermination. Required for transcription of ribosomal RNA (rRNA) genes. Binds specifically to the boxA antiterminator sequence of the ribosomal RNA (rrn) operons. The chain is Transcription antitermination protein NusB from Streptococcus equi subsp. zooepidemicus (strain H70).